The primary structure comprises 314 residues: MTVAPEDCRLLRLEVRNAQTPIERKPPWIKTRARMGPEYTALKNLVRRVALHTVCEEAGCPNIFECWEDREATFLIGGDQCTRRCDFCQIDTGKPAALDRDEPRRVAESVQTMGLRYTTVTGVARDDLPDGGAWLYATTVRAIKELNPSTGVELLIPDFNGQPARLAEVFDSRPQVLAHNVETVPRIFKRIRPAFTYQRSLDVLTAAREAGLVTKSNLILGLGETADEVRTALADLRKTGCDIVTITQYLRPSMRHHPVERWVRPEEFVEYTQYAEGLGFSGVLGGPLVRSSYRAGRLYEQAAGTRTVGTSVSR.

Residues Cys55, Cys60, Cys66, Cys81, Cys85, Cys88, and Ser292 each coordinate [4Fe-4S] cluster. The Radical SAM core domain occupies 67-281 (WEDREATFLI…TQYAEGLGFS (215 aa)).

The protein belongs to the radical SAM superfamily. Lipoyl synthase family. The cofactor is [4Fe-4S] cluster.

The protein localises to the cytoplasm. The catalysed reaction is [[Fe-S] cluster scaffold protein carrying a second [4Fe-4S](2+) cluster] + N(6)-octanoyl-L-lysyl-[protein] + 2 oxidized [2Fe-2S]-[ferredoxin] + 2 S-adenosyl-L-methionine + 4 H(+) = [[Fe-S] cluster scaffold protein] + N(6)-[(R)-dihydrolipoyl]-L-lysyl-[protein] + 4 Fe(3+) + 2 hydrogen sulfide + 2 5'-deoxyadenosine + 2 L-methionine + 2 reduced [2Fe-2S]-[ferredoxin]. It functions in the pathway protein modification; protein lipoylation via endogenous pathway; protein N(6)-(lipoyl)lysine from octanoyl-[acyl-carrier-protein]: step 2/2. Its function is as follows. Catalyzes the radical-mediated insertion of two sulfur atoms into the C-6 and C-8 positions of the octanoyl moiety bound to the lipoyl domains of lipoate-dependent enzymes, thereby converting the octanoylated domains into lipoylated derivatives. The protein is Lipoyl synthase of Mycobacterium leprae (strain Br4923).